The primary structure comprises 285 residues: G patch domain-containing protein 11 (285 aa).

Residues 51-87 (MLRQIREARRKEEKQQEANLKNRQKSLKEEEQERRDI) adopt a coiled-coil conformation. Residues 59-84 (RRKEEKQQEANLKNRQKSLKEEEQER) are disordered. A G-patch domain is found at 95–141 (CENKGFALLQKMGYKSGQALGKSGGGIVEPIPLNIKTGKSGIGHEAS). A Phosphoserine modification is found at S141. Position 149 is an N6-acetyllysine (K149). Over residues 218–235 (EETEEDEEEKEQDEDEYK) the composition is skewed to acidic residues. Positions 218 to 237 (EETEEDEEEKEQDEDEYKSE) are disordered.

It belongs to the GPATCH11 family.

It is found in the chromosome. It localises to the centromere. The protein resides in the kinetochore. The chain is G patch domain-containing protein 11 (GPATCH11) from Homo sapiens (Human).